The sequence spans 302 residues: MAANYWASTQRRHWLFTREKLAEIREIFREGDKVAHSQFPLPDQRLLNIYFSQQLIKLGKRMSTRQQALATAQVYIKRFYTKNEIRHTNPYLVLTTAFYLACKMEECPQHIRFVVGEARSLWPEFITPDVSKLGECEFSLISEMNSQLIVHHPYRTLSELQPELSLTSDEVALAWSVINDHYLTDLPLLYAPHVIAVMAIIVAVVFKPNSGNFHGSAAPVLAGAMRDGGMNVLAALGDRTGSGPPLKIQKLINWLAESEVDIKGVIECTQELVSLYEVWEQYSEKTCKELLGRMVKAKNLDK.

Residues 53 to 142 (QQLIKLGKRM…LGECEFSLIS (90 aa)) form the Cyclin N-terminal domain.

This sequence belongs to the cyclin family. Cyclin C subfamily. Component of the srb8-11 complex, a regulatory module of the Mediator complex.

Its subcellular location is the nucleus. In terms of biological role, component of the srb8-11 complex. The srb8-11 complex is a regulatory module of the Mediator complex which is itself involved in regulation of basal and activated RNA polymerase II-dependent transcription. The srb8-11 complex may be involved in the transcriptional repression of a subset of genes regulated by Mediator. It may inhibit the association of the Mediator complex with RNA polymerase II to form the holoenzyme complex. The srb8-11 complex phosphorylates the C-terminal domain (CTD) of the largest subunit of RNA polymerase II. The sequence is that of RNA polymerase II holoenzyme cyclin-like subunit (ssn8) from Aspergillus fumigatus (strain ATCC MYA-4609 / CBS 101355 / FGSC A1100 / Af293) (Neosartorya fumigata).